Reading from the N-terminus, the 1097-residue chain is DNA polymerase catalytic subunit (1097 aa).

Positions 1069–1097 (RGGDDSDGGDSEKENMDTERSSSHEAMET) are disordered. Residues 1078–1097 (DSEKENMDTERSSSHEAMET) are compositionally biased toward basic and acidic residues.

It belongs to the DNA polymerase type-B family.

It is found in the host nucleus. It carries out the reaction DNA(n) + a 2'-deoxyribonucleoside 5'-triphosphate = DNA(n+1) + diphosphate. This chain is DNA polymerase catalytic subunit (UL54), found in Murid herpesvirus 1 (strain Smith) (MuHV-1).